The primary structure comprises 127 residues: Putative iron-sulfur cluster insertion protein ErpA (127 aa).

A compositionally biased stretch (polar residues) spans 1–14 (MNTPFNDGSGQTDP). Positions 1-20 (MNTPFNDGSGQTDPMTDIPT) are disordered. 3 residues coordinate iron-sulfur cluster: Cys-55, Cys-119, and Cys-121.

Belongs to the HesB/IscA family. In terms of assembly, homodimer. Iron-sulfur cluster is required as a cofactor.

Its function is as follows. Required for insertion of 4Fe-4S clusters. This is Putative iron-sulfur cluster insertion protein ErpA from Nitrosospira multiformis (strain ATCC 25196 / NCIMB 11849 / C 71).